Reading from the N-terminus, the 845-residue chain is MPNDTNGDDYKKLEKASVNLNFLKSNSHTHIGPLSAIAELVDNAYDADARDLHIDFLDINNEQFLELRDDGLGMAREEALHAITFGHSAKCSYKIGRYGNGLKSGAFHLGRELLLVTKKDGIITALLISHRFHEDQGLTNSVFVPCPSFDLDGIPICQTESEKDRFNLEMKIIGKYAPLGSRTLAELADKITGSTGTIIIIGNLRRSVTGELAINTTKDPTDIIVDSGEENKPWRESLRKYLEFIYLKPRMRIHVRGEQVLPKRISENWIAKKQQLISGDQFTAAYNKILDEKNETVKKCEEEKALVMSEIGGTNYTSVRREDRANQKSLRLRVDTSQKNLDSAIADRDAFKKEGKSEKSFHLNMGIETKDRSNNGIHFYINNRLILWGNKEAKFFSKFANSIGISMFLSLDYSLFSAAQNKQGFDHVKDFQVLVRKCNDALRDYSMYLEKSWIPTHLKNTWNVRIYEGDDVWAVLWGVYGYNNTTSTTCVQTHDSARDQVMWTTCGIWKLCQMCRTWIKASRPNEIVGSNDDFFCCENVNHHGCRTIVAEDNDFSKLPEKYDHILPQKRLTNSAPSSSDSQNSIRSASSCSSSSRLLNVAKIESHERIHSSTGGHRLGESFSTTSVKMEPIPNNAHDSHIAEVQRRHSTGRAISPAVSEISRRAGTAPSSQLDMIMGEESDESQEALTIRAPRQRAKRPIERVSRRNRRDQSDDDSDSENEERYATAPKKSKVKGKAVVRAPKMTREKWLEEMLNQFLTAHGEQPLPKNGQRDFDPTNIVEQTSRRNFKNNQRIVDAQQAIMRQIGSVLDHLKRNPTHNFKIPASGTVEEKLKNIEHQIKGKKK.

Residues Asn43, 88–90, and 97–103 each bind ATP; these read SAK and RYGNGLK. Asn43 provides a ligand contact to Mg(2+). Residues 284 to 311 are a coiled coil; sequence AAYNKILDEKNETVKKCEEEKALVMSEI. ATP is bound at residue Lys422. Disordered stretches follow at residues 566–590 and 628–739; these read LPQKRLTNSAPSSSDSQNSIRSASS and KMEP…GKAV. Low complexity predominate over residues 574 to 590; that stretch reads SAPSSSDSQNSIRSASS. The segment covering 637–646 has biased composition (basic and acidic residues); sequence HDSHIAEVQR.

Predominantly forms monomers and dimers, but multimerizes to form trimers and tetramers upon DNA binding. In terms of tissue distribution, expressed in germline and somatic cells.

It localises to the nucleus. The protein resides in the nuclear body. It catalyses the reaction ATP + H2O = ADP + phosphate + H(+). Functionally, binds non-specifically to DNA and forms static foci which grow by recruiting other morc-1 molecules, and thereby stimulates conformational changes and compaction of DNA, which appears to be enhanced by ATP-binding, but does not require ATP activity. Preferentially binds to long DNAs. Compacts and entraps segments of DNA by sequentially forming loops along the DNA, beginning at the free ends of single- and double-tethered DNA. Does not extrude the DNA loops on compacted double-tethered DNA. Involved in gene silencing. Plays a role in germline RNA interference (RNAi), and in particular, the silencing of endogenous small interfering RNA (endo-siRNA) target genes. May play a role in heterochromatin localization and condensation, and the siRNAi-directed trimethylation of 'Lys-9' of histone H3 in hermaphrodite X chromosomes. Promotes transgenerational epigenetic inheritance and germline immortality. This Caenorhabditis elegans protein is ATPase morc-1.